A 283-amino-acid polypeptide reads, in one-letter code: MTAQLIDGNALAKTIRAEVAGRTAALKAKGVEPALSIILVGSDPASQVYTKHKVNDSTETGLAATLETYPADMSEAALLDRIRALNDDPKVHGILVQLPLPRHMDSQKVIETISPAKDVDGFHVASAGALMTGAPGFWPCTPYGCMKMLESIGYDLRGKHAVVIGRSNIVGKPMAMMLLARSATVTICHSATQDLAAFTRQADVIVAAVGKRNILTAGMVKPGAVVIDVGMNRKEDGKLAGDVDFDGVKEVAGWITPVPGGVGPMTRAMLLVNTLEAAERAAK.

Residues 165 to 167 (GRS) and S190 each bind NADP(+).

This sequence belongs to the tetrahydrofolate dehydrogenase/cyclohydrolase family. Homodimer.

The catalysed reaction is (6R)-5,10-methylene-5,6,7,8-tetrahydrofolate + NADP(+) = (6R)-5,10-methenyltetrahydrofolate + NADPH. The enzyme catalyses (6R)-5,10-methenyltetrahydrofolate + H2O = (6R)-10-formyltetrahydrofolate + H(+). Its pathway is one-carbon metabolism; tetrahydrofolate interconversion. Functionally, catalyzes the oxidation of 5,10-methylenetetrahydrofolate to 5,10-methenyltetrahydrofolate and then the hydrolysis of 5,10-methenyltetrahydrofolate to 10-formyltetrahydrofolate. This Variovorax paradoxus (strain S110) protein is Bifunctional protein FolD.